Reading from the N-terminus, the 151-residue chain is Deoxyuridine 5'-triphosphate nucleotidohydrolase (151 aa).

Substrate-binding positions include 70 to 72 (RSG), Asn83, 87 to 89 (LID), and Met97.

Belongs to the dUTPase family. It depends on Mg(2+) as a cofactor.

It carries out the reaction dUTP + H2O = dUMP + diphosphate + H(+). Its pathway is pyrimidine metabolism; dUMP biosynthesis; dUMP from dCTP (dUTP route): step 2/2. In terms of biological role, this enzyme is involved in nucleotide metabolism: it produces dUMP, the immediate precursor of thymidine nucleotides and it decreases the intracellular concentration of dUTP so that uracil cannot be incorporated into DNA. This chain is Deoxyuridine 5'-triphosphate nucleotidohydrolase, found in Pseudomonas aeruginosa (strain LESB58).